The primary structure comprises 234 residues: GTP-binding protein ypt4 (234 aa).

16 to 23 (GPSGTGKS) lines the GTP pocket. An Effector region motif is present at residues 39–47 (SHTVGIDFA). Position 68-72 (68-72 (DTAGQ)) interacts with GTP. 2 S-geranylgeranyl cysteine lipidation sites follow: Cys-233 and Cys-234.

This sequence belongs to the small GTPase superfamily. Rab family.

It localises to the cell membrane. This is GTP-binding protein ypt4 (ypt4) from Schizosaccharomyces pombe (strain 972 / ATCC 24843) (Fission yeast).